We begin with the raw amino-acid sequence, 1498 residues long: Mitogen-activated protein kinase kinase kinase nsy-1 (1498 aa).

Disordered regions lie at residues 1-35 and 190-209; these read MSQN…PTAY and LQSY…FART. Positions 22 to 33 are enriched in pro residues; the sequence is LPLPPRGAPPPT. The 262-residue stretch at 664 to 925 folds into the Protein kinase domain; that stretch reads SNERVVLGKG…AKDLLQDPFI (262 aa). ATP contacts are provided by residues 670–678 and lysine 693; that span reads LGKGTYGTV. The Proton acceptor role is filled by aspartate 790. The disordered stretch occupies residues 1022–1050; the sequence is IDHARNRTFSSSSPVPDGQSSAGTNMSHP. The segment covering 1031–1042 has biased composition (low complexity); sequence SSSSPVPDGQSS. A coiled-coil region spans residues 1276 to 1314; sequence SREERVREDRKELRTLQEENEILIERLLQVERELNAQLK. The disordered stretch occupies residues 1461-1498; it reads QPVFLSPMRSRDDSLDDYHSSSADDMYTGAAAETSSGN. Residues 1469 to 1479 are compositionally biased toward basic and acidic residues; the sequence is RSRDDSLDDYH.

The protein belongs to the protein kinase superfamily. STE Ser/Thr protein kinase family. MAP kinase kinase kinase subfamily. In terms of assembly, interacts with unc-43. Interacts with sek-1. Mg(2+) serves as cofactor. Post-translationally, may be phosphorylated upon pathogenic bacterial infection. May be regulated by proteasomal degradation mediated by the E3-ubiquitin ligase rle-1. As to expression, expressed in intestine, hypodermis, rectal gland cell and neurons including sensory AWC neurons.

The protein resides in the cell projection. The protein localises to the axon. Its subcellular location is the perikaryon. It carries out the reaction L-seryl-[protein] + ATP = O-phospho-L-seryl-[protein] + ADP + H(+). The catalysed reaction is L-threonyl-[protein] + ATP = O-phospho-L-threonyl-[protein] + ADP + H(+). In terms of biological role, serine/threonine-protein kinase which, by phosphorylating and activating sek-1, plays an important role in the activation of the p38 pathway also composed of the downstream effectors sek-1 and pmk-1. Downstream of CaMKII unc-43 and adapter protein tir-1, plays a role in determining asymmetric cell fates in olfactory AWC neurons during neuronal development. Activation results in the repression of odorant receptor str-2 expression in one of the 2 AWC neurons. Involved in resistance to pathogenic Gram-positive and Gram-negative bacterial and fungal infection. Involved in resistance to the nematotoxic C.cinerea galectin Cgl2. Probably by activating the sek1/pmk-1/skn-1 pathway, involved in the up-regulation of gcs-1 and glutathione-S-transferase gst-4 expression upon bacterial infection. Probably downstream of tir-1 and nipi-3, required for the expression of antimicrobial peptide nlp-29 in the epidermis in response to fungal infection or physical injury. Plays a role in resistance to several environmental stresses including oxidative, protein misfolding (ER) and osmotic stresses, and DNA-damaging reagents. Plays a role in the stabilization of transcription factor rnt-1 in the intestine during oxidative stress. Involved in germline apoptosis induced by heavy metals, such as Cu(2+). In addition, plays a role in the up-regulation of gcs-1 upon arsenite treatment, most likely through activation of pmk-1, to confer protection against toxicity induced by heavy metals. Plays a role downstream of tir-1 in regulating susceptibility to anoxia. Involved in egg laying. The sequence is that of Mitogen-activated protein kinase kinase kinase nsy-1 from Caenorhabditis elegans.